The primary structure comprises 171 residues: Adenine phosphoribosyltransferase (171 aa).

The protein belongs to the purine/pyrimidine phosphoribosyltransferase family. Homodimer.

It localises to the cytoplasm. The enzyme catalyses AMP + diphosphate = 5-phospho-alpha-D-ribose 1-diphosphate + adenine. It functions in the pathway purine metabolism; AMP biosynthesis via salvage pathway; AMP from adenine: step 1/1. Catalyzes a salvage reaction resulting in the formation of AMP, that is energically less costly than de novo synthesis. In Pelotomaculum thermopropionicum (strain DSM 13744 / JCM 10971 / SI), this protein is Adenine phosphoribosyltransferase.